The chain runs to 576 residues: WD repeat-containing protein 26 (576 aa).

The span at 1–20 (MQSNGTGQEQNHPANTQNGD) shows a compositional bias: polar residues. The interval 1-46 (MQSNGTGQEQNHPANTQNGDANGLQSNAGSASGASGTGSGSLKKKK) is disordered. Over residues 21-34 (ANGLQSNAGSASGA) the composition is skewed to low complexity. S49 carries the phosphoserine modification. The 33-residue stretch at 51 to 83 (AEEDVIRLIGQHLHGLGLNQTVDLLMQESGCRL) folds into the LisH domain. The CTLH domain occupies 84–143 (EHSSATKFRNHVMEGEWDKAENDLNELKALMHSPNAIVRMKFLLLQQKYLEYLEDGKVLE). WD repeat units lie at residues 265–304 (EHCN…HQLK), 311–350 (GHAY…GELR), 356–396 (SHED…ESWE), 436–475 (QEDH…LVRK), 478–520 (GVTQ…PIVE), and 523–563 (GHTR…DAQE).

As to quaternary structure, forms homooligomers. Identified in the CTLH complex that contains at least MAEA, RMND5A (or alternatively its paralog RMND5B), GID8, WDR26, and RANBP9 and/or RANBP10. Interacts with DDB1-CUL4A/B E3 ligase complexes.

It is found in the cytoplasm. The protein localises to the nucleus. Its subcellular location is the mitochondrion. G-beta-like protein involved in cell signal transduction. Acts as a negative regulator in MAPK signaling pathway. Functions as a scaffolding protein to promote G beta:gamma-mediated PLCB2 plasma membrane translocation and subsequent activation in leukocytes. Core component of the CTLH E3 ubiquitin-protein ligase complex that mediates ubiquitination and subsequent proteasomal degradation of target proteins. Acts as a negative regulator of the canonical Wnt signaling pathway through preventing ubiquitination of beta-catenin CTNNB1 by the beta-catenin destruction complex, thus negatively regulating CTNNB1 degradation. Serves as a scaffold to coordinate PI3K/AKT pathway-driven cell growth and migration. Protects cells from oxidative stress-induced apoptosis via the down-regulation of AP-1 transcriptional activity as well as by inhibiting cytochrome c release from mitochondria. Also protects cells by promoting hypoxia-mediated autophagy and mitophagy. The protein is WD repeat-containing protein 26 (wdr26) of Danio rerio (Zebrafish).